A 307-amino-acid chain; its full sequence is Mitochondrial glycine transporter YMC1 (307 aa).

Solcar repeat units follow at residues 26–106, 121–204, and 218–305; these read VKDL…MKRF, PQYY…LIAN, and PAWK…AMRL. A run of 6 helical transmembrane segments spans residues 29–49, 83–103, 118–138, 183–203, 223–243, and 277–298; these read LLAG…FDTT, LTPL…NEAM, LSLP…SFLA, TILR…ALIA, CIFG…LDVI, and FFKG…TFAT.

This sequence belongs to the mitochondrial carrier (TC 2.A.29) family.

It localises to the mitochondrion inner membrane. Secondary mitochondrial glycine transporter required for the biosynthesis of heme at high glycine concentrations. Imports the precursor glycine into the mitochondrial matrix, where it is condensed with succinyl-CoA to produce 5-aminolevulinate (ALA), the first step of heme biosynthesis. This Saccharomyces cerevisiae (strain ATCC 204508 / S288c) (Baker's yeast) protein is Mitochondrial glycine transporter YMC1.